Here is a 40-residue protein sequence, read N- to C-terminus: Photosystem II reaction center protein J (40 aa).

Residues 8–28 traverse the membrane as a helical segment; it reads IPLWLIGTLTGILVIGLIGIF.

Belongs to the PsbJ family. As to quaternary structure, PSII is composed of 1 copy each of membrane proteins PsbA, PsbB, PsbC, PsbD, PsbE, PsbF, PsbH, PsbI, PsbJ, PsbK, PsbL, PsbM, PsbT, PsbX, PsbY, PsbZ, Psb30/Ycf12, at least 3 peripheral proteins of the oxygen-evolving complex and a large number of cofactors. It forms dimeric complexes.

Its subcellular location is the plastid. It is found in the chloroplast thylakoid membrane. Its function is as follows. One of the components of the core complex of photosystem II (PSII). PSII is a light-driven water:plastoquinone oxidoreductase that uses light energy to abstract electrons from H(2)O, generating O(2) and a proton gradient subsequently used for ATP formation. It consists of a core antenna complex that captures photons, and an electron transfer chain that converts photonic excitation into a charge separation. This is Photosystem II reaction center protein J from Phalaenopsis aphrodite subsp. formosana (Moth orchid).